The chain runs to 590 residues: Protein phosphatase PP2A regulatory subunit A (590 aa).

HEAT repeat units follow at residues 12-50, 89-127, 206-244, 246-284, 285-323, 324-362, 363-401, 402-440, 480-518, 519-551, and 562-590; these read PIAV…TRDE, LLSP…LEQY, FIPL…EIRH, LLQP…IKDE, LIKP…VLEE, IIPV…TTEY, LLPM…LSQS, LLPA…FNEK, IIPK…IEKQ, ILPT…VLAA, and IIPL…QTND.

Belongs to the phosphatase 2A regulatory subunit A family. As to quaternary structure, PP2A exists in several trimeric forms, all of which consist of a core composed of a catalytic subunit associated with a 65 kDa (PR65) (Subunit A) and a 55 kDa (PR55) (Subunit B) regulatory subunit.

In terms of biological role, phosphatase 2A affects a variety of biological processes in the cell such as transcription, cell cycle progression and cellular morphogenesis, and provides an initial identification of critical substrates for this phosphatase. The regulatory subunit may direct the catalytic subunit to distinct, albeit overlapping, subsets of substrates. This is Protein phosphatase PP2A regulatory subunit A (paa1) from Schizosaccharomyces pombe (strain 972 / ATCC 24843) (Fission yeast).